Consider the following 288-residue polypeptide: MSSRKQGSQPRGQQSAEEENFKKPTRSNMQRSKMRGASSGKKTAGPQQKNLEPALPGRWGGRSAENPPSGSVRKTRKNKQKTPGNGDGGSTSEAPQPPRKKRARADPTVESEEAFKNRMEVKVKIPEELKPWLVEDWDLVTRQKQLFQLPAKKNVDAILEEYANCKKSQGNVDNKEYAVNEVVAGIKEYFNVMLGTQLLYKFERPQYAEILLAHPDAPMSQVYGAPHLLRLFVRIGAMLAYTPLDEKSLALLLGYLHDFLKYLAKNSASLFTASDYKVASAEYHRKAL.

Residues 1–15 show a composition bias toward polar residues; that stretch reads MSSRKQGSQPRGQQS. Positions 1-113 are disordered; that stretch reads MSSRKQGSQP…RADPTVESEE (113 aa). S71 is modified (phosphoserine). In terms of domain architecture, MRG spans 117–288; it reads NRMEVKVKIP…ASAEYHRKAL (172 aa).

In terms of assembly, component of the NuA4 histone acetyltransferase complex which contains the catalytic subunit KAT5/TIP60 and the subunits EP400, TRRAP/PAF400, BRD8/SMAP, EPC1, DMAP1/DNMAP1, RUVBL1/TIP49, RUVBL2, ING3, actin, ACTL6A/BAF53A, MORF4L1/MRG15, MORF4L2/MRGX, MRGBP, YEATS4/GAS41 and VPS72/YL1. The NuA4 complex interacts with MYC and the adenovirus E1A protein. MORF4L1 may also participate in the formation of NuA4 related complexes which lack the KAT5/TIP60 catalytic subunit, but which include the SWI/SNF related protein SRCAP. Component of the MSIN3A histone deacetylase complex, which includes SIN3A, HDAC2, ARID4B, MORF4L1, RBBP4/RbAp48, and RBBP7/RbAp46. Interacts with MRFAP1 and RB1. May also interact with one or more as yet undefined members of the TLE (transducin-like enhancer of split) family of transcriptional repressors.

The protein localises to the nucleus. Its function is as follows. Component of the NuA4 histone acetyltransferase complex which is involved in transcriptional activation of select genes principally by acetylation of nucleosomal histone H4 and H2A. This modification may both alter nucleosome - DNA interactions and promote interaction of the modified histones with other proteins which positively regulate transcription. This complex may be required for the activation of transcriptional programs associated with oncogene and proto-oncogene mediated growth induction, tumor suppressor mediated growth arrest and replicative senescence, apoptosis, and DNA repair. The NuA4 complex ATPase and helicase activities seem to be, at least in part, contributed by the association of RUVBL1 and RUVBL2 with EP400. NuA4 may also play a direct role in DNA repair when directly recruited to sites of DNA damage. Also a component of the MSIN3A complex which acts to repress transcription by deacetylation of nucleosomal histones. The protein is Mortality factor 4-like protein 2 (MORF4L2) of Homo sapiens (Human).